A 297-amino-acid chain; its full sequence is MVPYQELTLQRSFSYNSRKINPVTSPARSSHVRSPSSSALIPSIPEHELFLVPCRRCSYVPLSSSSSASHNIGKFHLKFSLLLRSFINIINIPACKMLSLPSPPSSSSSVSNQLISLVTGGSSSLGRRVTGTLYGHKRGHVTFSVQYNQRSDPVLLLDLAMSTATLVKEMSSGLVRIALECEKRHRSGTKLFQEPKWTMYCNGRKCGYAVSRGGACTDTDWRVLNTVSRVTVGAGVIPTPKTIDDVSGVGSGTELGELLYMRGKFERVVGSRDSEAFYMMNPDKNGGPELSIFLLRI.

As to expression, expressed in root meristematic region, cortical cells, lateral root cap cells, columella cells of the root cap, mature region of the roots and leaf hydathodes.

It is found in the endoplasmic reticulum membrane. Its function is as follows. Plays a role in lateral root development by maintaining auxin levels. This function requires GNOM (GN/MIZ2) activity. Negatively regulates cytokinin sensitivity on root development. Positively regulates hydrotropism in roots. The sequence is that of Protein MIZU-KUSSEI 1 (MIZ1) from Arabidopsis thaliana (Mouse-ear cress).